The sequence spans 139 residues: Phosphoribosyl-AMP cyclohydrolase (139 aa).

Residue aspartate 91 participates in Mg(2+) binding. Cysteine 92 contacts Zn(2+). Mg(2+) contacts are provided by aspartate 93 and aspartate 95. The Zn(2+) site is built by cysteine 110 and cysteine 117.

Belongs to the PRA-CH family. Homodimer. It depends on Mg(2+) as a cofactor. Zn(2+) is required as a cofactor.

It localises to the cytoplasm. The catalysed reaction is 1-(5-phospho-beta-D-ribosyl)-5'-AMP + H2O = 1-(5-phospho-beta-D-ribosyl)-5-[(5-phospho-beta-D-ribosylamino)methylideneamino]imidazole-4-carboxamide. It functions in the pathway amino-acid biosynthesis; L-histidine biosynthesis; L-histidine from 5-phospho-alpha-D-ribose 1-diphosphate: step 3/9. Catalyzes the hydrolysis of the adenine ring of phosphoribosyl-AMP. The chain is Phosphoribosyl-AMP cyclohydrolase from Brucella abortus (strain S19).